We begin with the raw amino-acid sequence, 203 residues long: Glycerol-3-phosphate acyltransferase (203 aa).

6 consecutive transmembrane segments (helical) span residues 3-23 (NLIL…LILA), 61-81 (ILTV…ASFL), 87-107 (VLWT…FLGF), 118-138 (GVLA…WFLV), 144-164 (ISSL…FIIH), and 172-192 (THAP…PNIV).

It belongs to the PlsY family. Probably interacts with PlsX.

The protein localises to the cell inner membrane. The catalysed reaction is an acyl phosphate + sn-glycerol 3-phosphate = a 1-acyl-sn-glycero-3-phosphate + phosphate. It participates in lipid metabolism; phospholipid metabolism. Functionally, catalyzes the transfer of an acyl group from acyl-phosphate (acyl-PO(4)) to glycerol-3-phosphate (G3P) to form lysophosphatidic acid (LPA). This enzyme utilizes acyl-phosphate as fatty acyl donor, but not acyl-CoA or acyl-ACP. The protein is Glycerol-3-phosphate acyltransferase of Campylobacter concisus (strain 13826).